We begin with the raw amino-acid sequence, 217 residues long: MAQKINPLGFRLGVTQNDRSHWFAQQRNYSKDLREDQKIRTCIENYVRTHIKSSSNYGGIARVEIRRKIDLIQVKIYIGFPNLLLIEGRGQGIEKLRNDVLNMLDSADRKLHIAIEKVAKPYRKPNILAEYIALQLEKRVPFRKTMKKAIELAEREEVEGIQIQIAGRLDGKEIARVEWDRGGRVPLQTIRARIDYCYYPVQTIYGVLGIKIWILEE.

A KH type-2 domain is found at 47-119; it reads VRTHIKSSSN…KLHIAIEKVA (73 aa).

It belongs to the universal ribosomal protein uS3 family. As to quaternary structure, part of the 30S ribosomal subunit.

It is found in the plastid. The protein resides in the chloroplast. This Pinus koraiensis (Korean pine) protein is Small ribosomal subunit protein uS3c (rps3).